Here is a 525-residue protein sequence, read N- to C-terminus: Light-independent protochlorophyllide reductase subunit B (525 aa).

Asp-36 contacts [4Fe-4S] cluster. The active-site Proton donor is the Asp-292. 428-429 (GL) serves as a coordination point for substrate. Residues 447-470 (PSASSENGSAPLSAGTATPAAAPE) form a disordered region. Residues 460-470 (AGTATPAAAPE) show a composition bias toward low complexity.

It belongs to the ChlB/BchB/BchZ family. In terms of assembly, protochlorophyllide reductase is composed of three subunits; BchL, BchN and BchB. Forms a heterotetramer of two BchB and two BchN subunits. Requires [4Fe-4S] cluster as cofactor.

The catalysed reaction is chlorophyllide a + oxidized 2[4Fe-4S]-[ferredoxin] + 2 ADP + 2 phosphate = protochlorophyllide a + reduced 2[4Fe-4S]-[ferredoxin] + 2 ATP + 2 H2O. The protein operates within porphyrin-containing compound metabolism; bacteriochlorophyll biosynthesis (light-independent). Functionally, component of the dark-operative protochlorophyllide reductase (DPOR) that uses Mg-ATP and reduced ferredoxin to reduce ring D of protochlorophyllide (Pchlide) to form chlorophyllide a (Chlide). This reaction is light-independent. The NB-protein (BchN-BchB) is the catalytic component of the complex. This Chlorobium luteolum (strain DSM 273 / BCRC 81028 / 2530) (Pelodictyon luteolum) protein is Light-independent protochlorophyllide reductase subunit B.